Here is a 436-residue protein sequence, read N- to C-terminus: Glutamate-1-semialdehyde 2,1-aminomutase (436 aa).

Lys274 carries the post-translational modification N6-(pyridoxal phosphate)lysine.

Belongs to the class-III pyridoxal-phosphate-dependent aminotransferase family. HemL subfamily. Homodimer. Pyridoxal 5'-phosphate serves as cofactor.

The protein resides in the cytoplasm. The catalysed reaction is (S)-4-amino-5-oxopentanoate = 5-aminolevulinate. It functions in the pathway porphyrin-containing compound metabolism; protoporphyrin-IX biosynthesis; 5-aminolevulinate from L-glutamyl-tRNA(Glu): step 2/2. This chain is Glutamate-1-semialdehyde 2,1-aminomutase, found in Albidiferax ferrireducens (strain ATCC BAA-621 / DSM 15236 / T118) (Rhodoferax ferrireducens).